The primary structure comprises 198 residues: Sortase D (198 aa).

Residues 7–25 (LFIIAAGLVIAGYGGFKLI) form a helical membrane-spanning segment. Basic and acidic residues predominate over residues 36-46 (KEAKLAAKKPQ). Residues 36 to 67 (KEAKLAAKKPQEASGTKNSTDQAKNKASFKPE) form a disordered region. The segment covering 48–57 (ASGTKNSTDQ) has biased composition (polar residues). H119 acts as the Proton donor/acceptor in catalysis. The active-site Acyl-thioester intermediate is the C177.

It belongs to the bacterial sortase family. Class D subfamily.

The protein localises to the cell membrane. Its function is as follows. Transpeptidase that anchors surface proteins to the cell wall. Recognizes and modifies its substrate by proteolytic cleavage of a C-terminal sorting signal. Following cleavage, a covalent intermediate is formed via a thioester bond between the sortase and its substrate, which is then transferred and covalently attached to the cell wall. This sortase recognizes a Leu-Pro-Asp-Thr-Ser/Ala (LPDTS/A) motif. It has two substrates, YhcR and YfkN. This Bacillus subtilis (strain 168) protein is Sortase D.